Consider the following 68-residue polypeptide: DNA-directed RNA polymerase subunit omega (68 aa).

Belongs to the RNA polymerase subunit omega family. As to quaternary structure, the RNAP catalytic core consists of 2 alpha, 1 beta, 1 beta' and 1 omega subunit. When a sigma factor is associated with the core the holoenzyme is formed, which can initiate transcription.

The enzyme catalyses RNA(n) + a ribonucleoside 5'-triphosphate = RNA(n+1) + diphosphate. Promotes RNA polymerase assembly. Latches the N- and C-terminal regions of the beta' subunit thereby facilitating its interaction with the beta and alpha subunits. This chain is DNA-directed RNA polymerase subunit omega, found in Citrifermentans bemidjiense (strain ATCC BAA-1014 / DSM 16622 / JCM 12645 / Bem) (Geobacter bemidjiensis).